Consider the following 216-residue polypeptide: Kynurenine formamidase (216 aa).

W24 serves as a coordination point for substrate. Zn(2+) contacts are provided by H54, H58, and D60. The Proton donor/acceptor role is filled by H64. Zn(2+) is bound by residues H164 and E176.

Belongs to the Cyclase 1 superfamily. KynB family. In terms of assembly, homodimer. It depends on Zn(2+) as a cofactor.

It catalyses the reaction N-formyl-L-kynurenine + H2O = L-kynurenine + formate + H(+). Its pathway is amino-acid degradation; L-tryptophan degradation via kynurenine pathway; L-kynurenine from L-tryptophan: step 2/2. In terms of biological role, catalyzes the hydrolysis of N-formyl-L-kynurenine to L-kynurenine, the second step in the kynurenine pathway of tryptophan degradation. In Erythrobacter litoralis (strain HTCC2594), this protein is Kynurenine formamidase.